We begin with the raw amino-acid sequence, 171 residues long: MDELKNIIRDIPDFPKKGIVFKDITTLLADAKSFQRMVDLLAHRYVGEKIDKVVGVEARGFILGAALAYKLGAGVVLVRKPGKLPSETFSKTYQLEYGTDSLEIHTDAIRKGEKVLIADDVLATGGTMSAVVEMVRDLGGEIVECCFLAELDFLGGRKKLPDGKVFSLLTF.

The protein belongs to the purine/pyrimidine phosphoribosyltransferase family. As to quaternary structure, homodimer.

It is found in the cytoplasm. The catalysed reaction is AMP + diphosphate = 5-phospho-alpha-D-ribose 1-diphosphate + adenine. It participates in purine metabolism; AMP biosynthesis via salvage pathway; AMP from adenine: step 1/1. In terms of biological role, catalyzes a salvage reaction resulting in the formation of AMP, that is energically less costly than de novo synthesis. The polypeptide is Adenine phosphoribosyltransferase (Geobacter metallireducens (strain ATCC 53774 / DSM 7210 / GS-15)).